A 202-amino-acid polypeptide reads, in one-letter code: dTTP/UTP pyrophosphatase (202 aa).

Residue D76 is the Proton acceptor of the active site.

The protein belongs to the Maf family. YhdE subfamily. The cofactor is a divalent metal cation.

The protein resides in the cytoplasm. The catalysed reaction is dTTP + H2O = dTMP + diphosphate + H(+). The enzyme catalyses UTP + H2O = UMP + diphosphate + H(+). Functionally, nucleoside triphosphate pyrophosphatase that hydrolyzes dTTP and UTP. May have a dual role in cell division arrest and in preventing the incorporation of modified nucleotides into cellular nucleic acids. The chain is dTTP/UTP pyrophosphatase from Neisseria meningitidis serogroup B (strain ATCC BAA-335 / MC58).